The sequence spans 79 residues: Short neurotoxin 6 (79 aa).

Positions 1-21 are cleaved as a signal peptide; that stretch reads MKTLLLTLVMVTIMCLDLGYT. 4 disulfide bridges follow: Cys-24–Cys-41, Cys-34–Cys-59, Cys-63–Cys-71, and Cys-72–Cys-77.

It belongs to the three-finger toxin family. Short-chain subfamily. Type III alpha-neurotoxin sub-subfamily. Expressed by the venom gland.

Its subcellular location is the secreted. Functionally, binds with high affinity to muscle nicotinic acetylcholine receptor (nAChR) and hinders acetylcholine binding to the receptor, thereby impairing neuromuscular transmission. Competes with the binding of alpha-bungarotoxin on muscle AChR (from Torpedo) with an IC(50) of 0.18 uM. Causes muscle paralysis, spasms and increased respiration. This chain is Short neurotoxin 6, found in Pseudonaja textilis (Eastern brown snake).